Consider the following 137-residue polypeptide: Small ribosomal subunit protein uS12 (137 aa).

Residues 1-55 (MPTINQLVRKPRKSKTKQSDSPALNRGFNSKKKQFTNLNSPQKRGVCTRVGTMTP) form a disordered region. At Asp102 the chain carries 3-methylthioaspartic acid. The tract at residues 118-137 (SGVDGRRQGRSLYGTKKPKN) is disordered.

This sequence belongs to the universal ribosomal protein uS12 family. Part of the 30S ribosomal subunit. Contacts proteins S8 and S17. May interact with IF1 in the 30S initiation complex.

With S4 and S5 plays an important role in translational accuracy. Functionally, interacts with and stabilizes bases of the 16S rRNA that are involved in tRNA selection in the A site and with the mRNA backbone. Located at the interface of the 30S and 50S subunits, it traverses the body of the 30S subunit contacting proteins on the other side and probably holding the rRNA structure together. The combined cluster of proteins S8, S12 and S17 appears to hold together the shoulder and platform of the 30S subunit. The protein is Small ribosomal subunit protein uS12 of Staphylococcus epidermidis (strain ATCC 35984 / DSM 28319 / BCRC 17069 / CCUG 31568 / BM 3577 / RP62A).